Consider the following 345-residue polypeptide: Galacturonate transporter (345 aa).

Positions 1–32 (MFKIKGLRWYMIGLVTIGTVLGYLTRNAIAAA) are cleaved as a signal peptide. 8 helical membrane-spanning segments follow: residues 49–69 (YIIA…GYVL), 76–96 (VGYA…ALAN), 100–120 (GLAV…PAGL), 139–159 (FNVG…WAIM), 165–185 (MAFL…LYFY), 237–257 (FLAE…MFKA), 265–285 (IAMF…LGGY), and 304–324 (LVVT…LFTS).

The protein belongs to the major facilitator superfamily. Phthalate permease family.

The protein resides in the cell inner membrane. The catalysed reaction is aldehydo-D-galacturonate(out) + H(+)(out) = aldehydo-D-galacturonate(in) + H(+)(in). Its activity is regulated as follows. Inhibited by cyanide and 2,4-dinitrophenol, but not by arsenate. Transport of D-galacturonate. Cannot transport the dimer digalacturonic acid. Uptake is an active process. The chain is Galacturonate transporter from Dickeya chrysanthemi (Pectobacterium chrysanthemi).